Here is a 365-residue protein sequence, read N- to C-terminus: Alanine racemase (365 aa).

K35 functions as the Proton acceptor; specific for D-alanine in the catalytic mechanism. K35 is modified (N6-(pyridoxal phosphate)lysine). Position 130 (R130) interacts with substrate. The Proton acceptor; specific for L-alanine role is filled by Y256. Position 304 (M304) interacts with substrate.

This sequence belongs to the alanine racemase family. Pyridoxal 5'-phosphate serves as cofactor.

It catalyses the reaction L-alanine = D-alanine. Its pathway is amino-acid biosynthesis; D-alanine biosynthesis; D-alanine from L-alanine: step 1/1. Functionally, catalyzes the interconversion of L-alanine and D-alanine. May also act on other amino acids. The sequence is that of Alanine racemase (alr) from Acidovorax ebreus (strain TPSY) (Diaphorobacter sp. (strain TPSY)).